A 247-amino-acid polypeptide reads, in one-letter code: DNA polymerase sliding clamp 1 (247 aa).

It belongs to the PCNA family. Homotrimer. The subunits circularize to form a toroid; DNA passes through its center. Replication factor C (RFC) is required to load the toroid on the DNA.

In terms of biological role, sliding clamp subunit that acts as a moving platform for DNA processing. Responsible for tethering the catalytic subunit of DNA polymerase and other proteins to DNA during high-speed replication. The chain is DNA polymerase sliding clamp 1 from Sulfolobus acidocaldarius (strain ATCC 33909 / DSM 639 / JCM 8929 / NBRC 15157 / NCIMB 11770).